We begin with the raw amino-acid sequence, 378 residues long: Probable mannosyltransferase MNT3 (378 aa).

Topologically, residues M1–H4 are cytoplasmic. Residues L5–F25 traverse the membrane as a helical; Signal-anchor for type II membrane protein segment. Residues K26–N378 lie on the Lumenal side of the membrane. N-linked (GlcNAc...) asparagine glycosylation is found at N73 and N149.

This sequence belongs to the glycosyltransferase 15 family.

The protein localises to the membrane. Transfers an alpha-D-mannosyl residue from GDP-mannose into lipid-linked oligosaccharide, forming an alpha-(1-&gt;2)-D-mannosyl-D-mannose linkage. This Candida albicans (strain SC5314 / ATCC MYA-2876) (Yeast) protein is Probable mannosyltransferase MNT3 (MNT3).